Here is a 1600-residue protein sequence, read N- to C-terminus: MPCARGSWLAKLSIVAQLINFGAFCHGRQTQPWPVRFPDPRQEHFIKSLPEYHIVSPVQVDAGGHVLSYGLHHPVTSSRKKRAAGGSGDQLYYRISHEEKDLFFNLTVNWEFLSNGYVVEKRYGNLSHVKMVASSGQPCHLRGTVLQQGTTVGIGTAALSACQGLTGFFHLPHGDFFIEPVKKHPLTEEGSYPHVVYRRQSIRAPETKEPICGLKDSLDNSVKQELQREKWERKTLRSRSLSRRSISKERWVETLVVADTKTVEYHGSENVESYILTIMNMVTGLFHSPSIGNLVHIVVVRLILLEEEEQGLKIVHHAEKTLSSFCKWQKSINPKSDLNPVHHDVAVLITRKDICAGVNRPCETLGLSQLSGMCQPHRSCNINEDSGLPLAFTIAHELGHSFGIQHDGKENDCEPVGRHPYIMSQQIQYDPTPLTWSKCSKEYITRFLDRGRGFCLDDIPSKKGLKSNVIAPGVIYDVHHQCQLQYGPNATFCQEVENVCQTLWCSVKGFCRSKLDAAADGTRCGEKKWCMAGKCITVGKKPESIPGGWGRWSPWSHCSRTCGAGAQSAERLCNNPEPKFGGKYCTGERKRYRLCNVHPCRSDTPTFRQMQCSEFDTVPYKNQFYRWFPVFNAAHPCELYCRPIDEQFSERMLEAVIDGTPCFEGGNSRNVCINGICKRVGCDYEIDSNATEDRCGVCLGDGSACQTVKKLFRQKEGSGYVDIGLIPKGARDIRVMEIKAAGNFLAIRSEDPEKYYLNGGFIIQWNGNYKLAGTVFQYDRKGDLEKLIAPGPTNESVWLQLLFQVTNPGIKYEYTVRKDGLDNDVEKLLYFWQFGRWTECSVTCGTGIRRQAAHCVKKGHGIVKTTFCNPETQPSVRQKKCHEKDCPPRWWAGEWEACSTTCGPYGEKKRTVLCIQTMGSDEQALPATDCQHLLKPKALVSCNRDILCPSDWTVGNWSECSVSCGGGVRIRSVTCAKNLNEPCDKTRKPNSRALCGLQQCPFSRRVLKPNKDIAPSGKNQSTAEHDPFKPIPAPTSRPTPLSTPTVPESMSTSTPTINSLGSTIASQEDANGMGWQNNSTQAEEGSHFPTSSGSTSQVPVTSWSLSIQPDDENVSSSAIGPTSEGDFWATTTSDSGLSSSDAMTWQVTPFYSTMTTDPEVEIHSGSGEDSDQPLNKDKSNSVIWNKIGVPEHDAPMETDAELPLGPPPTSYMGEEPSWPPFSTKMEGSLPAWSFKNETPRDDGMIAEKSRKIPLPLAGDHHPATSEKLENHDKLALPNTTNPTQGFGPVLTEEDASNLIAEGFLLNASDYKHLMKDHSPAYWIVGNWSKCSTTCGLGAYWRSVECSSGVDADCTTIQRPDPAKKCHLRPCAGWRVGNWSKCSRNCSGGFKIREVQCMDSLDHHRSLRPFHCQFLAGAPPPLSMSCNLEPCGEWQVEPWSQCSRSCGGGVQERGVSCPGGLCDWTKRPATTVPCNRHLCCHWATGNWELCNTSCGGGSQKRTIHCIPSENSTTEDQDQCLCDHQVKPPEFQTCNQQACRKSADLTCLKDRLSISFCQTLKSMRKCSVPSVRAQCCLSCPQAPSIHTQRQRKQQLLQNHDML.

The signal sequence occupies residues 1-25; it reads MPCARGSWLAKLSIVAQLINFGAFC. Positions 26 to 244 are excised as a propeptide; sequence HGRQTQPWPV…TLRSRSLSRR (219 aa). Asn105 is a glycosylation site (N-linked (GlcNAc...) asparagine). The Cysteine switch signature appears at 210–217; sequence PICGLKDS. Residue Cys212 coordinates Zn(2+). In terms of domain architecture, Peptidase M12B spans 250–460; it reads RWVETLVVAD…GRGFCLDDIP (211 aa). 11 disulfide bridges follow: Cys326/Cys380, Cys355/Cys362, Cys374/Cys455, Cys413/Cys439, Cys482/Cys505, Cys493/Cys511, Cys500/Cys530, Cys524/Cys535, Cys558/Cys595, Cys562/Cys600, and Cys573/Cys585. His396 lines the Zn(2+) pocket. Glu397 is a catalytic residue. Zn(2+) contacts are provided by His400 and His406. In terms of domain architecture, Disintegrin spans 469 to 548; sequence VIAPGVIYDV…GKKPESIPGG (80 aa). 4 consecutive TSP type-1 domains span residues 546-601, 827-887, 891-947, and 948-1001; these read PGGW…HPCR, KLLY…KDCP, WAGE…RDIL, and CPSD…QQCP. Positions 705–831 are spacer 1; that stretch reads CQTVKKLFRQ…DNDVEKLLYF (127 aa). A spacer 2 region spans residues 1001–1321; that stretch reads PFSRRVLKPN…HLMKDHSPAY (321 aa). Disordered regions lie at residues 1006 to 1140 and 1158 to 1179; these read VLKP…LSSS and PEVE…KDKS. Residues 1038–1047 show a composition bias toward low complexity; sequence PTPLSTPTVP. Residues 1048–1107 show a composition bias toward polar residues; that stretch reads ESMSTSTPTINSLGSTIASQEDANGMGWQNNSTQAEEGSHFPTSSGSTSQVPVTSWSLSI. Low complexity predominate over residues 1130 to 1140; sequence TTTSDSGLSSS. 4 TSP type-1 domains span residues 1318-1371, 1373-1428, 1429-1477, and 1478-1538; these read SPAY…RPCA, WRVG…CNLE, PCGE…NRHL, and CCHW…QACR. A PLAC domain is found at 1541–1581; it reads ADLTCLKDRLSISFCQTLKSMRKCSVPSVRAQCCLSCPQAP.

In terms of assembly, interacts with COMP. The cofactor is Zn(2+). In terms of processing, the precursor is cleaved by a furin endopeptidase. Post-translationally, subjected to an intracellular maturation process yielding a 120 kDa N-terminal fragment containing the metalloproteinase, disintegrin, one TSP type-1 and the Cys-rich domains and a 83 kDa C-terminal fragment containing the spacer 2 and four TSP type-1 domains. Glycosylated. Can be O-fucosylated by POFUT2 on a serine or a threonine residue found within the consensus sequence C1-X(2)-(S/T)-C2-G of the TSP type-1 repeat domains where C1 and C2 are the first and second cysteine residue of the repeat, respectively. Fucosylated repeats can then be further glycosylated by the addition of a beta-1,3-glucose residue by the glucosyltransferase, B3GALTL. Fucosylation mediates the efficient secretion of ADAMTS family members. Can also be C-glycosylated with one or two mannose molecules on tryptophan residues within the consensus sequence W-X-X-W of the TPRs, and N-glycosylated. These other glycosylations can also facilitate secretion.

Its subcellular location is the secreted. The protein resides in the extracellular space. It is found in the extracellular matrix. With respect to regulation, inhibited by alpha-2 macroglobulin. In terms of biological role, metalloprotease that plays a role in the degradation of COMP. Also cleaves alpha-2 macroglobulin and aggregan. Has anti-tumorigenic properties. This is A disintegrin and metalloproteinase with thrombospondin motifs 12 (Adamts12) from Mus musculus (Mouse).